Consider the following 89-residue polypeptide: Peroxidase (89 aa).

His52 lines the heme pocket. The Ca(2+) site is built by Thr53 and Asp68.

Heme b serves as cofactor. The cofactor is Ca(2+).

Its subcellular location is the secreted. It catalyses the reaction 2 a phenolic donor + H2O2 = 2 a phenolic radical donor + 2 H2O. Removal of H(2)O(2), oxidation of toxic reductants, biosynthesis and degradation of lignin, suberization, auxin catabolism, response to environmental stresses such as wounding, pathogen attack and oxidative stress. These functions might be dependent on each isozyme/isoform in each plant tissue. Active against p-coumaryl alcohol, coniferyl alcohol and coniferyl aldehyde. The sequence is that of Peroxidase from Ginkgo biloba (Ginkgo).